Consider the following 121-residue polypeptide: MARIAGVDLPRNKRVVIGLTYIYGIGNSTAQKILSEAGVSEDVRVRDLTADQEDKIRAVVDKYKVEGDLRREVSLNIKRLSEIGSYRGLRHRRHLPVRGQNTKNNARTRKGPAVSIAGKKK.

The tract at residues 93 to 121 (RHLPVRGQNTKNNARTRKGPAVSIAGKKK) is disordered.

It belongs to the universal ribosomal protein uS13 family. Part of the 30S ribosomal subunit. Forms a loose heterodimer with protein S19. Forms two bridges to the 50S subunit in the 70S ribosome.

In terms of biological role, located at the top of the head of the 30S subunit, it contacts several helices of the 16S rRNA. In the 70S ribosome it contacts the 23S rRNA (bridge B1a) and protein L5 of the 50S subunit (bridge B1b), connecting the 2 subunits; these bridges are implicated in subunit movement. Contacts the tRNAs in the A and P-sites. The sequence is that of Small ribosomal subunit protein uS13 from Ligilactobacillus salivarius (strain UCC118) (Lactobacillus salivarius).